We begin with the raw amino-acid sequence, 95 residues long: Osteocalcin-related protein (95 aa).

The first 23 residues, 1 to 23, serve as a signal peptide directing secretion; that stretch reads MRTLSLLTLLALAALCLSDLTDA. A propeptide spanning residues 24-49 is cleaved from the precursor; sequence TPTGPESDKAFMSKQEGNKVVNRLRR. Positions 46–92 constitute a Gla domain; it reads RLRRYLGASVPSPDPLEPTRELCELDPACDELSNQYGLKTAYRRIYG. Ca(2+)-binding residues include Glu62, Glu66, Glu69, and Asp75. Residues Glu66 and Glu69 each carry the 4-carboxyglutamate modification. The cysteines at positions 68 and 74 are disulfide-linked.

Belongs to the osteocalcin/matrix Gla protein family. Gamma-carboxyglutamic acid residues are formed by vitamin K dependent carboxylation. These residues are essential for the binding of calcium. In terms of tissue distribution, expressed in kidney and lung, but not in bone.

The protein localises to the secreted. Binds strongly to apatite and calcium. This chain is Osteocalcin-related protein, found in Mus musculus (Mouse).